A 1342-amino-acid polypeptide reads, in one-letter code: DNA-directed RNA polymerase subunit beta (1342 aa).

It belongs to the RNA polymerase beta chain family. As to quaternary structure, the RNAP catalytic core consists of 2 alpha, 1 beta, 1 beta' and 1 omega subunit. When a sigma factor is associated with the core the holoenzyme is formed, which can initiate transcription.

The enzyme catalyses RNA(n) + a ribonucleoside 5'-triphosphate = RNA(n+1) + diphosphate. Its function is as follows. DNA-dependent RNA polymerase catalyzes the transcription of DNA into RNA using the four ribonucleoside triphosphates as substrates. This is DNA-directed RNA polymerase subunit beta from Histophilus somni (strain 129Pt) (Haemophilus somnus).